Reading from the N-terminus, the 299-residue chain is ATP phosphoribosyltransferase (299 aa).

This sequence belongs to the ATP phosphoribosyltransferase family. Long subfamily. Mg(2+) serves as cofactor.

It localises to the cytoplasm. It carries out the reaction 1-(5-phospho-beta-D-ribosyl)-ATP + diphosphate = 5-phospho-alpha-D-ribose 1-diphosphate + ATP. It participates in amino-acid biosynthesis; L-histidine biosynthesis; L-histidine from 5-phospho-alpha-D-ribose 1-diphosphate: step 1/9. With respect to regulation, feedback inhibited by histidine. Functionally, catalyzes the condensation of ATP and 5-phosphoribose 1-diphosphate to form N'-(5'-phosphoribosyl)-ATP (PR-ATP). Has a crucial role in the pathway because the rate of histidine biosynthesis seems to be controlled primarily by regulation of HisG enzymatic activity. This chain is ATP phosphoribosyltransferase, found in Mannheimia succiniciproducens (strain KCTC 0769BP / MBEL55E).